An 810-amino-acid chain; its full sequence is Plasminogen (810 aa).

Residues 1 to 19 (MQRKELVLLFLLFLQPGHG) form the signal peptide. The 79-residue stretch at 20–98 (IPLDDYVTTQ…RDVILFEKKM (79 aa)) folds into the PAN domain. 24 disulfide bridges follow: C49-C73, C53-C61, C103-C181, C124-C164, C152-C176, C185-C262, C188-C316, C206-C245, C234-C257, C275-C352, C296-C335, C324-C347, C379-C456, C400-C439, C428-C451, C482-C561, C503-C544, C532-C556, C569-C685, C579-C586, C607-C623, C699-C766, C729-C745, and C756-C784. 5 Kringle domains span residues 103–181 (CKVG…IIQC), 185–262 (CMHC…IPRC), 275–352 (CLMG…IPDC), 379–456 (CYQG…LKKC), and 482–561 (CIID…IPHC). Residue N339 is glycosylated (N-linked (GlcNAc...) asparagine). Positions 398-418 (KKCQPWTSMRPHRHSKTPENY) are disordered. The region spanning 582 to 808 (RVGGCVAHPH…YVSWLQDVMR (227 aa)) is the Peptidase S1 domain. S598 is modified (phosphoserine). Residues H622 and D665 each act as charge relay system in the active site. S760 serves as the catalytic Charge relay system.

This sequence belongs to the peptidase S1 family. Plasminogen subfamily. Interacts with CSPG4 and AMOT. Interacts (via the Kringle domains) with HRG; the interaction tethers PLG to the cell surface and enhances its activation. Interacts (via Kringle 4 domain) with ADA; the interaction stimulates PLG activation when in complex with DPP4. Angiostatin: Interacts with ATP5F1A; the interaction inhibits most of the angiogenic effects of angiostatin. Post-translationally, in the presence of the inhibitor, the activation involves only cleavage after Arg-582, yielding two chains held together by two disulfide bonds. In the absence of the inhibitor, the activation involves additionally the removal of the activation peptide.

The protein localises to the secreted. It carries out the reaction Preferential cleavage: Lys-|-Xaa &gt; Arg-|-Xaa, higher selectivity than trypsin. Converts fibrin into soluble products.. Its activity is regulated as follows. Converted into plasmin by plasminogen activators, both plasminogen and its activator being bound to fibrin. Cannot be activated with streptokinase. Plasmin dissolves the fibrin of blood clots and acts as a proteolytic factor in a variety of other processes including embryonic development, tissue remodeling, tumor invasion, and inflammation. In ovulation, weakens the walls of the Graafian follicle. It activates the urokinase-type plasminogen activator, collagenases and several complement zymogens, such as C1, C4 and C5. Cleavage of fibronectin and laminin leads to cell detachment and apoptosis. Also cleaves fibrin, thrombospondin and von Willebrand factor. Its role in tissue remodeling and tumor invasion may be modulated by CSPG4. Binds to cells. This Erinaceus europaeus (Western European hedgehog) protein is Plasminogen (PLG).